We begin with the raw amino-acid sequence, 260 residues long: Histidine-binding periplasmic protein (260 aa).

The first 22 residues, 1–22 (MKKLVLSLSLVLAFSSATAAFA), serve as a signal peptide directing secretion. Cys-60 and Cys-67 are joined by a disulfide. Residues Ser-91, Ser-92, Ser-94, Arg-99, Thr-143, and Asp-183 each coordinate L-histidine.

Belongs to the bacterial solute-binding protein 3 family. As to quaternary structure, the complex is composed of two ATP-binding proteins (HisP), two transmembrane proteins (HisM and HisQ) and a solute-binding protein (HisJ).

The protein localises to the periplasm. Part of the ABC transporter complex HisPMQJ involved in histidine transport. Binds histidine. Interacts with HisQMP and stimulates ATPase activity of HisP, which results in histidine translocation. The chain is Histidine-binding periplasmic protein (hisJ) from Escherichia coli O157:H7.